The chain runs to 304 residues: Ribosomal RNA small subunit methyltransferase H (304 aa).

Residues Gly37–His39, Asp57, Phe79, Asp100, and His107 contribute to the S-adenosyl-L-methionine site.

It belongs to the methyltransferase superfamily. RsmH family.

The protein resides in the cytoplasm. It catalyses the reaction cytidine(1402) in 16S rRNA + S-adenosyl-L-methionine = N(4)-methylcytidine(1402) in 16S rRNA + S-adenosyl-L-homocysteine + H(+). Specifically methylates the N4 position of cytidine in position 1402 (C1402) of 16S rRNA. This chain is Ribosomal RNA small subunit methyltransferase H, found in Phocaeicola vulgatus (strain ATCC 8482 / DSM 1447 / JCM 5826 / CCUG 4940 / NBRC 14291 / NCTC 11154) (Bacteroides vulgatus).